Here is a 211-residue protein sequence, read N- to C-terminus: Ribosomal RNA large subunit methyltransferase E (211 aa).

G55, W57, D75, D93, and D117 together coordinate S-adenosyl-L-methionine. K157 (proton acceptor) is an active-site residue.

The protein belongs to the class I-like SAM-binding methyltransferase superfamily. RNA methyltransferase RlmE family.

It is found in the cytoplasm. It catalyses the reaction uridine(2552) in 23S rRNA + S-adenosyl-L-methionine = 2'-O-methyluridine(2552) in 23S rRNA + S-adenosyl-L-homocysteine + H(+). Specifically methylates the uridine in position 2552 of 23S rRNA at the 2'-O position of the ribose in the fully assembled 50S ribosomal subunit. This is Ribosomal RNA large subunit methyltransferase E from Methanothermobacter thermautotrophicus (strain ATCC 29096 / DSM 1053 / JCM 10044 / NBRC 100330 / Delta H) (Methanobacterium thermoautotrophicum).